The primary structure comprises 335 residues: UPF0353 protein MAP_1207 (335 aa).

A run of 2 helical transmembrane segments spans residues 18-38 (WFFL…LMQL) and 67-87 (LPAI…AGPT). In terms of domain architecture, VWFA spans 98–294 (VVMLVIDVSQ…QELKSVYATL (197 aa)). A helical membrane pass occupies residues 309-329 (VGWVRLGALVLALAALTALLI).

This sequence belongs to the UPF0353 family.

Its subcellular location is the cell membrane. This Mycolicibacterium paratuberculosis (strain ATCC BAA-968 / K-10) (Mycobacterium paratuberculosis) protein is UPF0353 protein MAP_1207.